The following is a 312-amino-acid chain: Olfactory receptor 7D4 (312 aa).

Residues 1 to 25 (MEAENLTELSKFLLLGLSDDPELQP) are Extracellular-facing. Asn5 carries N-linked (GlcNAc...) asparagine glycosylation. The helical transmembrane segment at 26-46 (VLFGLFLSMYLVTVLGNLLII) threads the bilayer. The Cytoplasmic portion of the chain corresponds to 47 to 54 (LAVSSDSH). The chain crosses the membrane as a helical span at residues 55 to 75 (LHTPMYFFLSNLSFVDICFIS). Residues 76-99 (TTVPKMLVSIQARSKDISYMGCLT) lie on the Extracellular side of the membrane. Cys97 and Cys189 are joined by a disulfide. Residues 100 to 120 (QVYFLMMFAGMDTFLLAVMAY) form a helical membrane-spanning segment. Residues 121–139 (DRFVAICHPLHYTVIMNPC) lie on the Cytoplasmic side of the membrane. A helical membrane pass occupies residues 140 to 160 (LCGLLVLASWFIIFWFSLVHI). The Extracellular segment spans residues 161–197 (LLMKRLTFSTGTEIPHFFCEPAQVLKVACSNTLLNNI). The chain crosses the membrane as a helical span at residues 198-217 (VLYVATALLGVFPVAGILFS). The Cytoplasmic portion of the chain corresponds to 218–237 (YSQIVSSLMGMSSTKGKYKA). The chain crosses the membrane as a helical span at residues 238-258 (FSTCGSHLCVVSLFYGTGLGV). The Extracellular segment spans residues 259–271 (YLSSAVTHSSQSS). A helical membrane pass occupies residues 272-292 (STASVMYAMVTPMLNPFIYSL). At 293-312 (RNKDVKGALERLLSRADSCP) the chain is on the cytoplasmic side.

Belongs to the G-protein coupled receptor 1 family. In terms of tissue distribution, nasal olfactory epithelium.

It localises to the cell membrane. Functionally, odorant receptor. Selectively activated by androstenone and the related odorous steroid androstadienone. The polypeptide is Olfactory receptor 7D4 (OR7D4) (Homo sapiens (Human)).